A 200-amino-acid chain; its full sequence is MMMFGKISRQLCSLKKIPWSCDSRYFWEWLNTVFNKVDYERLRDVGPDRAASEWLLRCGAKVRYCGHQKWLHDYNTLPGSSIDRYKIQAIDATDSCIMDIGLDHMVGLEHVEKITLCKCHYIEDNCLQRLSQLENLRKSLLELEIIACGNVTDNGVIALRHFRNLKYLFLSDLPGVKDKEYLAQVFKTALPSLELKLNLK.

The N-terminal 25 residues, 1–25, are a transit peptide targeting the mitochondrion; sequence MMMFGKISRQLCSLKKIPWSCDSRY. The segment at 1-61 is N-terminal domain; that stretch reads MMMFGKISRQ…SEWLLRCGAK (61 aa). Gly59 lines the Mg(2+) pocket. LRR repeat units follow at residues 62–87, 88–116, 117–141, and 142–173; these read VRYC…RYKI, QAID…KITL, CKCH…KSLL, and ELEI…LSDL. Thr93 lines the Mg(2+) pocket.

The protein belongs to the ATP synthase subunit s family. In terms of assembly, homotetramer. Associates with ATP synthase.

The protein resides in the mitochondrion. It localises to the mitochondrion inner membrane. Involved in regulation of mitochondrial membrane ATP synthase. Necessary for H(+) conduction of ATP synthase. Facilitates energy-driven catalysis of ATP synthesis by blocking a proton leak through an alternative proton exit pathway. This is ATP synthase subunit s, mitochondrial (Dmac2l) from Mus musculus (Mouse).